The sequence spans 312 residues: GTP cyclohydrolase MptA (312 aa).

This sequence belongs to the GTP cyclohydrolase IV family. As to quaternary structure, homodimer. Requires Fe(2+) as cofactor.

The enzyme catalyses GTP + H2O = 7,8-dihydroneopterin 2',3'-cyclic phosphate + formate + diphosphate + H(+). The protein operates within cofactor biosynthesis; 5,6,7,8-tetrahydromethanopterin biosynthesis. In terms of biological role, converts GTP to 7,8-dihydro-D-neopterin 2',3'-cyclic phosphate, the first intermediate in the biosynthesis of coenzyme methanopterin. This Methanococcus vannielii (strain ATCC 35089 / DSM 1224 / JCM 13029 / OCM 148 / SB) protein is GTP cyclohydrolase MptA.